Here is a 163-residue protein sequence, read N- to C-terminus: Epithelial membrane protein 3 (163 aa).

The helical transmembrane segment at 4–24 (LLLVVSALHILILVLLFVATL) threads the bilayer. 2 N-linked (GlcNAc...) asparagine glycosylation sites follow: Asn46 and Asn56. Transmembrane regions (helical) follow at residues 66 to 86 (VQALMVLSLILCCLSFILFMF), 100 to 120 (TGLCQLCTSAAVFSGALIYAI), and 139 to 159 (FALAWVAFPLALVSGTVYIHL).

This sequence belongs to the PMP-22/EMP/MP20 family.

It localises to the membrane. In terms of biological role, probably involved in cell proliferation and cell-cell interactions. This Mus musculus (Mouse) protein is Epithelial membrane protein 3 (Emp3).